A 1355-amino-acid polypeptide reads, in one-letter code: Probable aldehyde oxidase 2 (1355 aa).

Residues 9–96 (RPVVVTVNGE…HCAVTTSEGI (88 aa)) form the 2Fe-2S ferredoxin-type domain. [2Fe-2S] cluster contacts are provided by Cys48, Cys53, Cys56, and Cys78. Positions 244–422 (VAVTGDGWFH…VSISIPDWGS (179 aa)) constitute an FAD-binding PCMH-type domain. A disordered region spans residues 544–577 (PENANVPNGSCTNGTANGSANSSPEKHSNVDSSD). Polar residues predominate over residues 548–566 (NVPNGSCTNGTANGSANSS).

It belongs to the xanthine dehydrogenase family. In terms of assembly, aldehyde oxidases (AO) are homodimers and heterodimers of AO subunits. [2Fe-2S] cluster serves as cofactor. The cofactor is FAD. Mo-molybdopterin is required as a cofactor.

It carries out the reaction an aldehyde + O2 + H2O = a carboxylate + H2O2 + H(+). The sequence is that of Probable aldehyde oxidase 2 from Oryza sativa subsp. japonica (Rice).